Consider the following 438-residue polypeptide: Adenylosuccinate synthetase (438 aa).

Residues 13-19 (GDEGKGK) and 41-43 (GHT) each bind GTP. The active-site Proton acceptor is the Asp14. Positions 14 and 41 each coordinate Mg(2+). Residues 14-17 (DEGK), 39-42 (NAGH), Thr130, Arg144, Gln225, Thr240, and Arg310 each bind IMP. The Proton donor role is filled by His42. A substrate-binding site is contributed by 306–312 (ATTGRLR). GTP is bound by residues Arg312, 338-340 (KLD), and 421-423 (STG).

Belongs to the adenylosuccinate synthetase family. As to quaternary structure, homodimer. Mg(2+) serves as cofactor.

Its subcellular location is the cytoplasm. The catalysed reaction is IMP + L-aspartate + GTP = N(6)-(1,2-dicarboxyethyl)-AMP + GDP + phosphate + 2 H(+). Its pathway is purine metabolism; AMP biosynthesis via de novo pathway; AMP from IMP: step 1/2. In terms of biological role, plays an important role in the de novo pathway of purine nucleotide biosynthesis. Catalyzes the first committed step in the biosynthesis of AMP from IMP. This chain is Adenylosuccinate synthetase, found in Vibrio parahaemolyticus serotype O3:K6 (strain RIMD 2210633).